The chain runs to 595 residues: Beta-hexosaminidase 1 (595 aa).

An N-terminal signal peptide occupies residues 1 to 20 (MRFAYLATLAGSLLAGLAQA). Asn-313 carries N-linked (GlcNAc...) asparagine glycosylation.

Belongs to the glycosyl hydrolase 20 family.

The catalysed reaction is Hydrolysis of terminal non-reducing N-acetyl-D-hexosamine residues in N-acetyl-beta-D-hexosaminides.. In terms of biological role, beta-hexosaminidase that shows a broad substrate specificity. The protein is Beta-hexosaminidase 1 of Coccidioides posadasii (strain RMSCC 757 / Silveira) (Valley fever fungus).